Reading from the N-terminus, the 328-residue chain is Probable tRNA pseudouridine synthase B (328 aa).

Residue aspartate 71 is the Nucleophile of the active site. One can recognise a PUA domain in the interval 238 to 313 (LPKIWVRDSA…LVARVDRVIM (76 aa)).

This sequence belongs to the pseudouridine synthase TruB family. Type 2 subfamily.

The enzyme catalyses uridine(55) in tRNA = pseudouridine(55) in tRNA. In terms of biological role, could be responsible for synthesis of pseudouridine from uracil-55 in the psi GC loop of transfer RNAs. This is Probable tRNA pseudouridine synthase B from Pyrobaculum islandicum (strain DSM 4184 / JCM 9189 / GEO3).